The sequence spans 304 residues: Large ribosomal subunit protein uL2 (304 aa).

The interval 246-282 (HTRGTAMNPVDHPHGGGEGRTRGKHPESPWGWKTKGY) is disordered. Basic and acidic residues predominate over residues 256–272 (DHPHGGGEGRTRGKHPE).

The protein belongs to the universal ribosomal protein uL2 family. As to quaternary structure, part of the 50S ribosomal subunit. Forms a bridge to the 30S subunit in the 70S ribosome.

Functionally, one of the primary rRNA binding proteins. Required for association of the 30S and 50S subunits to form the 70S ribosome, for tRNA binding and peptide bond formation. It has been suggested to have peptidyltransferase activity; this is somewhat controversial. Makes several contacts with the 16S rRNA in the 70S ribosome. In Aquifex aeolicus (strain VF5), this protein is Large ribosomal subunit protein uL2.